We begin with the raw amino-acid sequence, 456 residues long: B-cell linker protein (456 aa).

Positions 36 to 301 are disordered; sequence IKKLKVKAPP…QSPVFPPAQK (266 aa). The segment covering 57–74 has biased composition (acidic residues); that stretch reads PADEEEQWSDDFDSDYEN. Phosphotyrosine; by SYK is present on residues Y72, Y84, Y96, Y178, and Y189. Positions 173-187 are enriched in acidic residues; the sequence is EDEADYVVPVEDNDE. A compositionally biased stretch (low complexity) spans 212–226; the sequence is PNSSTPASPPGTASG. Residues 236–245 are compositionally biased toward pro residues; the sequence is SPPPAAPSPL. A compositionally biased stretch (low complexity) spans 251 to 260; sequence KPTTPLKTTP. Residues 271-289 show a composition bias toward basic and acidic residues; the sequence is CEEKPIPAERHRGSSHRQE. An SH2 domain is found at 346-453; it reads WYAGACDRKS…KDSTRLKYAV (108 aa).

As to quaternary structure, associates with PLCG1, VAV1 and NCK1 in a B-cell antigen receptor-dependent fashion. Interacts with VAV3, PLCG2 and GRB2. Interacts through its SH2 domain with CD79A. Interacts (via SH2 domain) with SYK; phosphorylated and activated by SYK. Interacts (via SH2 domain) with SCIMP; this interaction is dependent on phosphorylation of SCIMP 'Tyr-131'. Following BCR activation, phosphorylated on tyrosine residues by SYK and LYN. When phosphorylated, serves as a scaffold to assemble downstream targets of antigen activation, including PLCG1, VAV1, GRB2 and NCK1. Phosphorylation of Tyr-84, Tyr-178 and Tyr-189 facilitates PLCG1 binding. Phosphorylation of Tyr-96 facilitates BTK binding. Phosphorylation of Tyr-72 facilitates VAV1 and NCK1 binding. Phosphorylation is required for both Ca(2+) and MAPK signaling pathways. As to expression, expressed in B-cell lineage and fibroblast cell lines (at protein level). Highest levels of expression in the spleen, with lower levels in the liver, kidney, pancreas, small intestines and colon.

It localises to the cytoplasm. The protein localises to the cell membrane. Functions as a central linker protein, downstream of the B-cell receptor (BCR), bridging the SYK kinase to a multitude of signaling pathways and regulating biological outcomes of B-cell function and development. Plays a role in the activation of ERK/EPHB2, MAP kinase p38 and JNK. Modulates AP1 activation. Important for the activation of NF-kappa-B and NFAT. Plays an important role in BCR-mediated PLCG1 and PLCG2 activation and Ca(2+) mobilization and is required for trafficking of the BCR to late endosomes. However, does not seem to be required for pre-BCR-mediated activation of MAP kinase and phosphatidyl-inositol 3 (PI3) kinase signaling. May be required for the RAC1-JNK pathway. Plays a critical role in orchestrating the pro-B cell to pre-B cell transition. May play an important role in BCR-induced B-cell apoptosis. This Homo sapiens (Human) protein is B-cell linker protein (BLNK).